The primary structure comprises 313 residues: Ribosomal RNA small subunit methyltransferase H (313 aa).

S-adenosyl-L-methionine contacts are provided by residues 35–37, Asp55, Phe79, Asp101, and Gln108; that span reads GGH.

It belongs to the methyltransferase superfamily. RsmH family.

The protein resides in the cytoplasm. The enzyme catalyses cytidine(1402) in 16S rRNA + S-adenosyl-L-methionine = N(4)-methylcytidine(1402) in 16S rRNA + S-adenosyl-L-homocysteine + H(+). Functionally, specifically methylates the N4 position of cytidine in position 1402 (C1402) of 16S rRNA. The polypeptide is Ribosomal RNA small subunit methyltransferase H (Edwardsiella ictaluri (strain 93-146)).